A 417-amino-acid polypeptide reads, in one-letter code: Serine hydroxymethyltransferase (417 aa).

Lys54 carries the N6-acetyllysine modification. (6S)-5,6,7,8-tetrahydrofolate is bound by residues Leu121 and 125-127; that span reads GHL. Lys229 is modified (N6-(pyridoxal phosphate)lysine). Residues Lys250, Lys285, and Lys354 each carry the N6-acetyllysine modification. 355 to 357 lines the (6S)-5,6,7,8-tetrahydrofolate pocket; sequence SPF. Lys375 bears the N6-acetyllysine mark.

It belongs to the SHMT family. Homodimer. Pyridoxal 5'-phosphate is required as a cofactor.

The protein localises to the cytoplasm. It catalyses the reaction (6R)-5,10-methylene-5,6,7,8-tetrahydrofolate + glycine + H2O = (6S)-5,6,7,8-tetrahydrofolate + L-serine. The protein operates within one-carbon metabolism; tetrahydrofolate interconversion. It participates in amino-acid biosynthesis; glycine biosynthesis; glycine from L-serine: step 1/1. Catalyzes the reversible interconversion of serine and glycine with tetrahydrofolate (THF) serving as the one-carbon carrier. This reaction serves as the major source of one-carbon groups required for the biosynthesis of purines, thymidylate, methionine, and other important biomolecules. Also exhibits THF-independent aldolase activity toward beta-hydroxyamino acids, producing glycine and aldehydes, via a retro-aldol mechanism. The polypeptide is Serine hydroxymethyltransferase (Shigella sonnei (strain Ss046)).